A 164-amino-acid polypeptide reads, in one-letter code: Glycine cleavage system H protein, mitochondrial (164 aa).

The N-terminal 39 residues, 1 to 39 (MAWLVLRRLGPVLAPRCPRLSLRPQVPAVRRLGTGSLLL), are a transit peptide targeting the mitochondrion. Residues 57 to 139 (IGTVGISNFA…YQDGWLIKMT (83 aa)) enclose the Lipoyl-binding domain. K98 bears the N6-lipoyllysine mark.

The protein belongs to the GcvH family. In terms of assembly, the glycine cleavage system is composed of four proteins: P (GLDC), T (GCST), L (DLD) and H (GCSH). Interacts with GLDC. It depends on (R)-lipoate as a cofactor.

It is found in the mitochondrion. In terms of biological role, the glycine cleavage system catalyzes the degradation of glycine. The H protein (GCSH) shuttles the methylamine group of glycine from the P protein (GLDC) to the T protein (GCST). Has a pivotal role in the lipoylation of enzymes involved in cellular energetics such as the mitochondrial dihydrolipoyllysine-residue acetyltransferase component of pyruvate dehydrogenase complex (DLAT), and the mitochondrial dihydrolipoyllysine-residue succinyltransferase component of 2-oxoglutarate dehydrogenase complex (DLST). This chain is Glycine cleavage system H protein, mitochondrial, found in Gallus gallus (Chicken).